We begin with the raw amino-acid sequence, 201 residues long: High mobility group protein homolog 068R (201 aa).

DNA-binding regions (HMG box) lie at residues P70–K138 and T143–K201.

This sequence belongs to the IIV-6 401R family.

It localises to the host nucleus. This is High mobility group protein homolog 068R from Invertebrate iridescent virus 3 (IIV-3).